Reading from the N-terminus, the 370-residue chain is UDP-3-O-acylglucosamine N-acyltransferase (370 aa).

His252 (proton acceptor) is an active-site residue. The tract at residues Asn348 to Val370 is disordered.

It belongs to the transferase hexapeptide repeat family. LpxD subfamily. Homotrimer.

It carries out the reaction a UDP-3-O-[(3R)-3-hydroxyacyl]-alpha-D-glucosamine + a (3R)-hydroxyacyl-[ACP] = a UDP-2-N,3-O-bis[(3R)-3-hydroxyacyl]-alpha-D-glucosamine + holo-[ACP] + H(+). It participates in bacterial outer membrane biogenesis; LPS lipid A biosynthesis. Functionally, catalyzes the N-acylation of UDP-3-O-acylglucosamine using 3-hydroxyacyl-ACP as the acyl donor. Is involved in the biosynthesis of lipid A, a phosphorylated glycolipid that anchors the lipopolysaccharide to the outer membrane of the cell. The protein is UDP-3-O-acylglucosamine N-acyltransferase of Paraburkholderia phytofirmans (strain DSM 17436 / LMG 22146 / PsJN) (Burkholderia phytofirmans).